The chain runs to 744 residues: FNIP repeat-containing protein cigB (744 aa).

9 FNIP repeats span residues 340-376, 383-422, 426-462, 469-508, 512-550, 555-594, 598-635, 641-678, and 684-723; these read FNQK…TVTT, FNQK…TVIL, FNQK…TVTR, FNQK…TITL, FNQK…TTVR, FNQK…VTTV, and FNQK…NVYI.

The protein is FNIP repeat-containing protein cigB (cigB) of Dictyostelium discoideum (Social amoeba).